A 1074-amino-acid chain; its full sequence is MSLKNEPRVNTSALQKIAADMSNIIENLDTRELHFEGEEVDYDVSPSDPKIQEVYIPFSAIYNTQGFKEPNIQTYLSGCPIKAQVLEVERFTSTTRVPSINLYTIELTHGEFKWQVKRKFKHFQEFHRELLKYKAFIRIPIPTRRHTFRRQNVREEPREMPSLPRSSENMIREEQFLGRRKQLEDYLTKILKMPMYRNYHATTEFLDISQLSFIHDLGPKGIEGMIMKRSGGHRIPGLNCCGQGRACYRWSKRWLIVKDSFLLYMKPDSGAIAFVLLVDKEFKIKVGKKETETKYGIRIDNLSRTLILKCNSYRHARWWGGAIEEFIQKHGTNFLKDHRFGSYAAIQENALAKWYVNAKGYFEDVANAMEEANEEIFITDWWLSPEIFLKRPVVEGNRWRLDCILKRKAQQGVRIFIMLYKEVELALGINSEYTKRTLMRLHPNIKVMRHPDHVSSTVYLWAHHEKLVIIDQSVAFVGGIDLAYGRWDDNEHRLTDVGSVKRVTSGPSLGSLPPAAMESMESLRLKDKNEPVQNLPIQKSIDDVDSKLKGIGKPRKFSKFSLYKQLHRHHLHDADSISSIDSTSSYFNHYRSHHNLIHGLKPHFKLFHPSSESEQGLTRPHADTGSIRSLQTGVGELHGETRFWHGKDYCNFVFKDWVQLDKPFADFIDRYSTPRMPWHDIASAVHGKAARDVARHFIQRWNFTKIMKSKYRSLSYPFLLPKSQTTAHELRYQVPGSVHANVQLLRSAADWSAGIKYHEESIHAAYVHVIENSRHYIYIENQFFISCADDKVVFNKIGDAIAQRILKAHRENQKYRVYVVIPLLPGFEGDISTGGGNALQAIMHFNYRTMCRGENSILGQLKAELGNQWINYISFCGLRTHAELEGNLVTELIYVHSKLLIADDNTVIIGSANINDRSMLGKRDSEMAVIVQDTETVPSVMDGKEYQAGRFARGLRLQCFRVVLGYLDDPSEDIQDPVSDKFFKEVWVSTAARNATIYDKVFRCLPNDEVHNLIQLRDFINKPVLAKEDPIRAEEELKKIRGFLVQFPFYFLSEESLLPSVGTKEAIVPMEVWT.

A PX domain is found at Ile-81–Ser-212. Residues Pro-219–Gln-328 form the PH domain. S-palmitoyl cysteine attachment occurs at residues Cys-240 and Cys-241. The region spanning Tyr-459–Arg-486 is the PLD phosphodiesterase 1 domain. The catalytic stretch occupies residues His-463–Ala-928. Residues Ser-499, Ser-561, and Ser-629 each carry the phosphoserine modification. A PLD phosphodiesterase 2 domain is found at Glu-891 to Ser-918.

This sequence belongs to the phospholipase D family. Interacts with PIP5K1B. Expressed abundantly in the pancreas and heart and at high levels in brain, placenta, spleen, uterus and small intestine.

It is found in the cytoplasm. It localises to the perinuclear region. The protein resides in the endoplasmic reticulum membrane. Its subcellular location is the golgi apparatus membrane. The protein localises to the late endosome membrane. It catalyses the reaction a 1,2-diacyl-sn-glycero-3-phosphocholine + H2O = a 1,2-diacyl-sn-glycero-3-phosphate + choline + H(+). The catalysed reaction is ethanol + a 1,2-diacyl-sn-glycero-3-phosphocholine = 1,2-diacyl-sn-glycero-3-phosphoethanol + choline. The enzyme catalyses 1,2-dihexadecanoyl-sn-glycero-3-phosphocholine + H2O = 1,2-dihexadecanoyl-sn-glycero-3-phosphate + choline + H(+). Its activity is regulated as follows. Stimulated by phosphatidylinositol 4,5-bisphosphate and phosphatidylinositol 3,4,5-trisphosphate, activated by the phosphokinase C-alpha, by the ADP-ribosylation factor-1 (ARF-1), and to a lesser extent by GTP-binding proteins: RHO A, RAC-1 and CDC42. Inhibited by oleate. Functionally, function as phospholipase selective for phosphatidylcholine. Implicated as a critical step in numerous cellular pathways, including signal transduction, membrane trafficking, and the regulation of mitosis. May be involved in the regulation of perinuclear intravesicular membrane traffic. This is Phospholipase D1 from Homo sapiens (Human).